We begin with the raw amino-acid sequence, 540 residues long: Testis-specific chromodomain protein Y 1 (540 aa).

Positions 6–66 constitute a Chromo domain; the sequence is FEVEAIVDKR…RQTEKQKKLT (61 aa). A disordered region spans residues 76 to 106; the sequence is NNARRRTSRSTKANYSKNSPKTPVTDKHHRS. The segment covering 87-97 has biased composition (polar residues); it reads KANYSKNSPKT.

In terms of assembly, interacts (via chromo domain) with histone H3K9me3. In terms of tissue distribution, testis-specific. Detected in spermatids (at protein level).

It is found in the nucleus. The enzyme catalyses L-lysyl-[protein] + acetyl-CoA = N(6)-acetyl-L-lysyl-[protein] + CoA + H(+). Its function is as follows. Has histone acetyltransferase activity, with a preference for histone H4. The polypeptide is Testis-specific chromodomain protein Y 1 (CDY1) (Homo sapiens (Human)).